The following is a 449-amino-acid chain: MLSSQTSSIFTVSRLNQTVRLLLEQEMGQVWISGEISNFTQPASGHWYFTLKDDTAQVRCAMFRNSNRRVTFRPQHGQQVLVRANITLYEPRGDYQVIAESMQPAGEGLLQQKYEQLKAKLQAEGLFDQQHKQPLPSPAHCVGVITSKTGAALHDILHVLKRRDPSLPVIIYPTAVQGDDAPGQIVRAIELANARGECDVLIVGRGGGSLEDLWSFNDERVARAIFASRIPVVSAVGHETDVTIADFVADLRAPTPSAAAEIVSRNQQELLRQIQSAQQRLGMAMDYYLANRSRRFTQIFHRLQQQHPQLRLARQQTALERLRQRMGFALEARIKQATQRQQRVSQRLSQQNPQPRIHRAQSRIQQLEYRLTENIRSRLSEQRERFGNAVTHLEAVSPLATLARGYTVSTTTDGKVLKKIKQVNAGDIMTTRLEDGWLESEVKSVTPGT.

It belongs to the XseA family. Heterooligomer composed of large and small subunits.

Its subcellular location is the cytoplasm. It catalyses the reaction Exonucleolytic cleavage in either 5'- to 3'- or 3'- to 5'-direction to yield nucleoside 5'-phosphates.. Bidirectionally degrades single-stranded DNA into large acid-insoluble oligonucleotides, which are then degraded further into small acid-soluble oligonucleotides. This is Exodeoxyribonuclease 7 large subunit from Salmonella newport (strain SL254).